Here is a 952-residue protein sequence, read N- to C-terminus: 2-oxoglutarate dehydrogenase E1 component (952 aa).

Belongs to the alpha-ketoglutarate dehydrogenase family. As to quaternary structure, homodimer. Part of the 2-oxoglutarate dehydrogenase (OGDH) complex composed of E1 (2-oxoglutarate dehydrogenase), E2 (dihydrolipoamide succinyltransferase) and E3 (dihydrolipoamide dehydrogenase); the complex contains multiple copies of the three enzymatic components (E1, E2 and E3). The cofactor is thiamine diphosphate.

The catalysed reaction is N(6)-[(R)-lipoyl]-L-lysyl-[protein] + 2-oxoglutarate + H(+) = N(6)-[(R)-S(8)-succinyldihydrolipoyl]-L-lysyl-[protein] + CO2. Its function is as follows. E1 component of the 2-oxoglutarate dehydrogenase (OGDH) complex which catalyzes the decarboxylation of 2-oxoglutarate, the first step in the conversion of 2-oxoglutarate to succinyl-CoA and CO(2). The sequence is that of 2-oxoglutarate dehydrogenase E1 component from Geobacillus sp. (strain WCH70).